We begin with the raw amino-acid sequence, 531 residues long: tRNA-2-methylthio-N(6)-dimethylallyladenosine synthase (531 aa).

The disordered stretch occupies residues 1–26; it reads MNEKQRLEQTGQIKTESHPADRKSAL. Basic and acidic residues predominate over residues 15-26; sequence TESHPADRKSAL. The MTTase N-terminal domain maps to 80–198; the sequence is RKFYIRTYGC…LPYILHEAYM (119 aa). [4Fe-4S] cluster is bound by residues Cys89, Cys125, Cys159, Cys235, Cys239, and Cys242. The Radical SAM core domain maps to 221 to 451; it reads RKGKIKAWVN…NDLVQEIAAK (231 aa). The TRAM domain maps to 454–517; sequence KQYEGQVVEV…TWTLTGELVN (64 aa).

This sequence belongs to the methylthiotransferase family. MiaB subfamily. Monomer. [4Fe-4S] cluster serves as cofactor.

The protein localises to the cytoplasm. The enzyme catalyses N(6)-dimethylallyladenosine(37) in tRNA + (sulfur carrier)-SH + AH2 + 2 S-adenosyl-L-methionine = 2-methylsulfanyl-N(6)-dimethylallyladenosine(37) in tRNA + (sulfur carrier)-H + 5'-deoxyadenosine + L-methionine + A + S-adenosyl-L-homocysteine + 2 H(+). Functionally, catalyzes the methylthiolation of N6-(dimethylallyl)adenosine (i(6)A), leading to the formation of 2-methylthio-N6-(dimethylallyl)adenosine (ms(2)i(6)A) at position 37 in tRNAs that read codons beginning with uridine. This is tRNA-2-methylthio-N(6)-dimethylallyladenosine synthase from Geobacillus kaustophilus (strain HTA426).